Consider the following 367-residue polypeptide: RYamide receptor (367 aa).

The Extracellular portion of the chain corresponds to methionine 1 to serine 35. N-linked (GlcNAc...) asparagine glycosylation is found at asparagine 4, asparagine 8, and asparagine 21. Residues methionine 36–leucine 56 form a helical membrane-spanning segment. Over serine 57–asparagine 66 the chain is Cytoplasmic. Residues phenylalanine 67–threonine 87 form a helical membrane-spanning segment. The Extracellular portion of the chain corresponds to serine 88–serine 113. Asparagine 107 carries an N-linked (GlcNAc...) asparagine glycan. The chain crosses the membrane as a helical span at residues valine 114–tryptophan 134. At proline 135–arginine 143 the chain is on the cytoplasmic side. Residues phenylalanine 144–alanine 164 traverse the membrane as a helical segment. Residues threonine 165 to glutamine 212 are Extracellular-facing. Residues tyrosine 213–cysteine 233 traverse the membrane as a helical segment. Residues histidine 234 to methionine 258 are Cytoplasmic-facing. The helical transmembrane segment at methionine 259 to phenylalanine 279 threads the bilayer. The Extracellular segment spans residues lysine 280–histidine 282. Residues isoleucine 283–alanine 303 traverse the membrane as a helical segment. The Cytoplasmic portion of the chain corresponds to cysteine 304–alanine 367.

It belongs to the G-protein coupled receptor 1 family.

The protein resides in the cell membrane. Functionally, receptor for the neuropeptides RYamide-1 and RYamide-2. The activity of this receptor is mediated by G proteins which activate a phosphatidyl-inositol-calcium second messenger system. RYamide-2 is the most potent activator. The sequence is that of RYamide receptor from Tribolium castaneum (Red flour beetle).